A 358-amino-acid polypeptide reads, in one-letter code: Phospho-N-acetylmuramoyl-pentapeptide-transferase (358 aa).

A run of 10 helical transmembrane segments spans residues 28 to 48 (WALA…IAWL), 72 to 92 (TMGG…WADL), 96 to 116 (YIWL…LDDY), 133 to 153 (FLWQ…LPAY), 164 to 184 (GLTP…MVGS), 196 to 216 (GLAI…IYVA), 233 to 253 (VGEV…FLWF), 260 to 280 (VFMG…LAVL), 285 to 305 (LLLL…ILQV), and 335 to 355 (KIII…LSVL).

The protein belongs to the glycosyltransferase 4 family. MraY subfamily. The cofactor is Mg(2+).

Its subcellular location is the cell inner membrane. The catalysed reaction is UDP-N-acetyl-alpha-D-muramoyl-L-alanyl-gamma-D-glutamyl-meso-2,6-diaminopimeloyl-D-alanyl-D-alanine + di-trans,octa-cis-undecaprenyl phosphate = di-trans,octa-cis-undecaprenyl diphospho-N-acetyl-alpha-D-muramoyl-L-alanyl-D-glutamyl-meso-2,6-diaminopimeloyl-D-alanyl-D-alanine + UMP. Its pathway is cell wall biogenesis; peptidoglycan biosynthesis. Functionally, catalyzes the initial step of the lipid cycle reactions in the biosynthesis of the cell wall peptidoglycan: transfers peptidoglycan precursor phospho-MurNAc-pentapeptide from UDP-MurNAc-pentapeptide onto the lipid carrier undecaprenyl phosphate, yielding undecaprenyl-pyrophosphoryl-MurNAc-pentapeptide, known as lipid I. In Nitratidesulfovibrio vulgaris (strain ATCC 29579 / DSM 644 / CCUG 34227 / NCIMB 8303 / VKM B-1760 / Hildenborough) (Desulfovibrio vulgaris), this protein is Phospho-N-acetylmuramoyl-pentapeptide-transferase.